A 586-amino-acid polypeptide reads, in one-letter code: Phosphatidylinositol-3-phosphatase SAC1-B (586 aa).

The Cytoplasmic segment spans residues 1–519 (MASTYNSFNL…TPLHEPKDWK (519 aa)). The SAC domain occupies 121–450 (LNSVLNTDGF…ANACAKQYAG (330 aa)). Residues 451–586 (TGALKTDFTR…PRLVQKEKMD (136 aa)) are essential for phosphatidylinositol-4-phosphate phosphatase activity. Residues 520 to 540 (FLTLPIIMVVAFSMCIICLLM) form a helical membrane-spanning segment. Residues 541–547 (AGDTWTE) are Lumenal-facing. The helical transmembrane segment at 548–568 (TLAYVLFWGSASVVTGGVILF) threads the bilayer. Residues 569 to 586 (NGRDFVDAPRLVQKEKMD) are Cytoplasmic-facing.

The protein localises to the endoplasmic reticulum membrane. Its subcellular location is the golgi apparatus membrane. It carries out the reaction a 1,2-diacyl-sn-glycero-3-phospho-(1D-myo-inositol-3-phosphate) + H2O = a 1,2-diacyl-sn-glycero-3-phospho-(1D-myo-inositol) + phosphate. The enzyme catalyses a 1,2-diacyl-sn-glycero-3-phospho-(1D-myo-inositol 4-phosphate) + H2O = a 1,2-diacyl-sn-glycero-3-phospho-(1D-myo-inositol) + phosphate. Functionally, phosphoinositide phosphatase which catalyzes the hydrolysis of phosphatidylinositol 4-phosphate (PtdIns(4)P), phosphatidylinositol 3-phosphate (PtdIns(3)P) and has low activity towards phosphatidylinositol-3,5-bisphosphate (PtdIns(3,5)P2). This is Phosphatidylinositol-3-phosphatase SAC1-B (sacm1lb) from Danio rerio (Zebrafish).